Consider the following 185-residue polypeptide: ATP synthase subunit b, chloroplastic (185 aa).

A helical transmembrane segment spans residues 31–53; sequence IINITVVLGILIYFGKGVLSNLL.

It belongs to the ATPase B chain family. As to quaternary structure, F-type ATPases have 2 components, F(1) - the catalytic core - and F(0) - the membrane proton channel. F(1) has five subunits: alpha(3), beta(3), gamma(1), delta(1), epsilon(1). F(0) has four main subunits: a(1), b(1), b'(1) and c(10-14). The alpha and beta chains form an alternating ring which encloses part of the gamma chain. F(1) is attached to F(0) by a central stalk formed by the gamma and epsilon chains, while a peripheral stalk is formed by the delta, b and b' chains.

Its subcellular location is the plastid. It is found in the chloroplast thylakoid membrane. In terms of biological role, f(1)F(0) ATP synthase produces ATP from ADP in the presence of a proton or sodium gradient. F-type ATPases consist of two structural domains, F(1) containing the extramembraneous catalytic core and F(0) containing the membrane proton channel, linked together by a central stalk and a peripheral stalk. During catalysis, ATP synthesis in the catalytic domain of F(1) is coupled via a rotary mechanism of the central stalk subunits to proton translocation. Functionally, component of the F(0) channel, it forms part of the peripheral stalk, linking F(1) to F(0). This chain is ATP synthase subunit b, chloroplastic, found in Gnetum parvifolium (Small-leaved jointfir).